Reading from the N-terminus, the 313-residue chain is Calcyphosin-2 (313 aa).

3 consecutive EF-hand domains span residues 144–179, 180–215, and 216–251; these read RILT…FHLE, VSEK…EMNE, and YRKS…KKHS. 5 residues coordinate Ca(2+): aspartate 193, asparagine 195, asparagine 197, lysine 199, and glutamate 204.

The polypeptide is Calcyphosin-2 (CAPS2) (Macaca fascicularis (Crab-eating macaque)).